The sequence spans 387 residues: UDP-N-acetylglucosamine--N-acetylmuramyl-(pentapeptide) pyrophosphoryl-undecaprenol N-acetylglucosamine transferase (387 aa).

The segment at Met1–Ala22 is disordered. UDP-N-acetyl-alpha-D-glucosamine contacts are provided by residues Thr41–Gly43, Asn158, Arg194, Ser222, Ile276, and Gln321.

The protein belongs to the glycosyltransferase 28 family. MurG subfamily.

The protein resides in the cell inner membrane. It carries out the reaction di-trans,octa-cis-undecaprenyl diphospho-N-acetyl-alpha-D-muramoyl-L-alanyl-D-glutamyl-meso-2,6-diaminopimeloyl-D-alanyl-D-alanine + UDP-N-acetyl-alpha-D-glucosamine = di-trans,octa-cis-undecaprenyl diphospho-[N-acetyl-alpha-D-glucosaminyl-(1-&gt;4)]-N-acetyl-alpha-D-muramoyl-L-alanyl-D-glutamyl-meso-2,6-diaminopimeloyl-D-alanyl-D-alanine + UDP + H(+). It participates in cell wall biogenesis; peptidoglycan biosynthesis. In terms of biological role, cell wall formation. Catalyzes the transfer of a GlcNAc subunit on undecaprenyl-pyrophosphoryl-MurNAc-pentapeptide (lipid intermediate I) to form undecaprenyl-pyrophosphoryl-MurNAc-(pentapeptide)GlcNAc (lipid intermediate II). The protein is UDP-N-acetylglucosamine--N-acetylmuramyl-(pentapeptide) pyrophosphoryl-undecaprenol N-acetylglucosamine transferase of Polaromonas sp. (strain JS666 / ATCC BAA-500).